The chain runs to 236 residues: Alanyl-tRNA editing protein AlaX-M (236 aa).

3 residues coordinate Zn(2+): histidine 101, histidine 105, and histidine 205.

It belongs to the class-II aminoacyl-tRNA synthetase family. Editing domain AlaX-M subfamily. Requires Zn(2+) as cofactor.

It is found in the cytoplasm. Functions in trans to edit the amino acid moiety from incorrectly charged Ser-tRNA(Ala). The chain is Alanyl-tRNA editing protein AlaX-M (alaXM) from Saccharolobus solfataricus (strain ATCC 35092 / DSM 1617 / JCM 11322 / P2) (Sulfolobus solfataricus).